Here is an 829-residue protein sequence, read N- to C-terminus: Pre-mRNA-splicing factor syf1 (829 aa).

12 HAT repeats span residues 15–47 (SLVS…YKLQ), 49–81 (GTVQ…FRTK), 93–125 (SEYQ…FLMQ), 127–161 (PLVT…FANS), 163–182 (EGET…PEDA), 277–312 (GSFE…FEES), 380–418 (DNKE…FYEA), 420–456 (GDLS…MELR), 473–505 (APKR…YVDL), 544–578 (KYFE…KAVD), 581–615 (ISIE…LEEE), and 689–723 (GEID…FEVQ). Positions 799–829 (AASEGPKGGSMPVQPVEVHNPDAIDLDEMDE) are disordered.

The protein belongs to the crooked-neck family. In terms of assembly, associated with the spliceosome.

The protein resides in the nucleus. Functionally, involved in pre-mRNA splicing and cell cycle progression. The chain is Pre-mRNA-splicing factor syf1 (msp-41) from Neurospora crassa (strain ATCC 24698 / 74-OR23-1A / CBS 708.71 / DSM 1257 / FGSC 987).